The chain runs to 563 residues: GTPase Obg (563 aa).

In terms of domain architecture, Obg spans 2–168 (SDFVDRVTVH…RDVILELKSI (167 aa)). Residues 169–349 (ADVALVGFPS…LNFALSALVH (181 aa)) enclose the OBG-type G domain. Residues 175 to 182 (GFPSAGKS), 200 to 204 (FTTLV), 221 to 224 (DVPG), 301 to 304 (NKID), and 330 to 332 (STA) contribute to the GTP site. Residues Ser-182 and Thr-202 each contribute to the Mg(2+) site. The 87-residue stretch at 383–469 (DEGGSALEFT…ARMVEFDWDP (87 aa)) folds into the OCT domain. Disordered regions lie at residues 478-509 (LDGS…ERRA) and 528-563 (ERKA…ETEE). Residues 486 to 509 (RGKDLRLEEQDPRTHRRSNAERRA) show a composition bias toward basic and acidic residues.

The protein belongs to the TRAFAC class OBG-HflX-like GTPase superfamily. OBG GTPase family. As to quaternary structure, monomer. It depends on Mg(2+) as a cofactor.

The protein localises to the cytoplasm. Its function is as follows. An essential GTPase which binds GTP, GDP and possibly (p)ppGpp with moderate affinity, with high nucleotide exchange rates and a fairly low GTP hydrolysis rate. Plays a role in control of the cell cycle, stress response, ribosome biogenesis and in those bacteria that undergo differentiation, in morphogenesis control. This chain is GTPase Obg, found in Bifidobacterium longum subsp. infantis (strain ATCC 15697 / DSM 20088 / JCM 1222 / NCTC 11817 / S12).